We begin with the raw amino-acid sequence, 219 residues long: Large ribosomal subunit protein uL29m (219 aa).

The interval 77–97 is disordered; that stretch reads ASKYPLPKPVSPEKLEKREST. The segment covering 87 to 97 has biased composition (basic and acidic residues); the sequence is SPEKLEKREST.

The protein belongs to the universal ribosomal protein uL29 family. As to quaternary structure, component of the mitochondrial large ribosomal subunit. Mature mitochondrial ribosomes consist of a small (37S) and a large (54S) subunit. The 37S subunit contains at least 33 different proteins and 1 molecule of RNA (15S). The 54S subunit contains at least 45 different proteins and 1 molecule of RNA (21S).

It is found in the mitochondrion. The sequence is that of Large ribosomal subunit protein uL29m (mrpl4) from Emericella nidulans (strain FGSC A4 / ATCC 38163 / CBS 112.46 / NRRL 194 / M139) (Aspergillus nidulans).